We begin with the raw amino-acid sequence, 291 residues long: Ribosomal RNA small subunit methyltransferase A (291 aa).

The S-adenosyl-L-methionine site is built by H21, L23, G48, E70, D95, and N115.

Belongs to the class I-like SAM-binding methyltransferase superfamily. rRNA adenine N(6)-methyltransferase family. RsmA subfamily.

Its subcellular location is the cytoplasm. It catalyses the reaction adenosine(1518)/adenosine(1519) in 16S rRNA + 4 S-adenosyl-L-methionine = N(6)-dimethyladenosine(1518)/N(6)-dimethyladenosine(1519) in 16S rRNA + 4 S-adenosyl-L-homocysteine + 4 H(+). Functionally, specifically dimethylates two adjacent adenosines (A1518 and A1519) in the loop of a conserved hairpin near the 3'-end of 16S rRNA in the 30S particle. May play a critical role in biogenesis of 30S subunits. This is Ribosomal RNA small subunit methyltransferase A from Prochlorococcus marinus (strain NATL2A).